Consider the following 188-residue polypeptide: Guanylate kinase (188 aa).

The Guanylate kinase-like domain occupies 4–183 (RNIVVLTAPS…AVEETLTRIR (180 aa)). Residue 11 to 18 (APSGAGKT) coordinates ATP.

Belongs to the guanylate kinase family.

Its subcellular location is the cytoplasm. The enzyme catalyses GMP + ATP = GDP + ADP. Essential for recycling GMP and indirectly, cGMP. This is Guanylate kinase from Salinibacter ruber (strain DSM 13855 / M31).